The primary structure comprises 433 residues: uncharacterized protein (433 aa).

This sequence belongs to the mimivirus R160 family.

The protein localises to the virion. This is an uncharacterized protein from Acanthamoeba polyphaga mimivirus (APMV).